We begin with the raw amino-acid sequence, 171 residues long: Alpha-amylase/trypsin inhibitor CMd (171 aa).

Positions 1 to 24 (MACKSSRSLLLLATVMVSVFAAAA) are cleaved as a signal peptide.

The protein belongs to the protease inhibitor I6 (cereal trypsin/alpha-amylase inhibitor) family. In terms of assembly, heterotetramer of one CMa, one CMb and two CMd chains. Five disulfide bonds, which are essential for the inhibitor activity, are probably present. As to expression, endosperm.

Its subcellular location is the secreted. Functionally, part of a complex with inhibitory activity, but CMd is inactive as a separate subunit. The sequence is that of Alpha-amylase/trypsin inhibitor CMd (IAT3) from Hordeum vulgare (Barley).